A 92-amino-acid chain; its full sequence is Transcription factor PRE1 (92 aa).

The bHLH domain occupies 4-59 (RRSRQSSSAPRISDNQMIDLVSKLRQILPEIGQRRRSDKASASKVLQETCNYIRNL).

Interacts with IBH1 and HFR1. In terms of tissue distribution, expressed in roots, leaves, stems and flowers.

The protein localises to the nucleus. Its function is as follows. Atypical and probable non DNA-binding bHLH transcription factor that integrates multiple signaling pathways to regulate cell elongation and plant development. Binds IBH1, forming a pair of antagonistic bHLH transcription factors that function downstream of BZR1 to mediate brassinosteroid regulation of cell elongation. Regulates light responses by binding and inhibiting the activity of the bHLH transcription factor HFR1, a critical regulator of light signaling and shade avoidance. May have a regulatory role in various aspects of gibberellin-dependent growth and development. This chain is Transcription factor PRE1 (PRE1), found in Arabidopsis thaliana (Mouse-ear cress).